A 254-amino-acid chain; its full sequence is Keratin-associated protein 24-1 (254 aa).

6 tandem repeats follow at residues 193–202 (YISNSCQPQS), 203–212 (YLVRNYHYSS), 213–222 (YRPTSCRPLS), 223–232 (YLSRSFRSLS), 233–242 (YIPSTFPPLR), and 243–252 (YLCSGSRPLK). A 6 X 10 AA repeats of Y-[ILR]-[SVPC]-[NRTS]-[SNTG]-X-[QHRP]-[PSY]-[QSL]-[SRK] region spans residues 193 to 252 (YISNSCQPQSYLVRNYHYSSYRPTSCRPLSYLSRSFRSLSYIPSTFPPLRYLCSGSRPLK).

This sequence belongs to the PMG family. In terms of assembly, interacts with hair keratins. As to expression, specific expression in the middle/upper hair cuticle.

Its function is as follows. In the hair cortex, hair keratin intermediate filaments are embedded in an interfilamentous matrix, consisting of hair keratin-associated proteins (KRTAP), which are essential for the formation of a rigid and resistant hair shaft through their extensive disulfide bond cross-linking with abundant cysteine residues of hair keratins. The matrix proteins include the high-sulfur and high-glycine-tyrosine keratins. The sequence is that of Keratin-associated protein 24-1 (KRTAP24-1) from Homo sapiens (Human).